We begin with the raw amino-acid sequence, 599 residues long: Proline--tRNA ligase (599 aa).

The protein belongs to the class-II aminoacyl-tRNA synthetase family. ProS type 1 subfamily. In terms of assembly, homodimer.

Its subcellular location is the cytoplasm. It catalyses the reaction tRNA(Pro) + L-proline + ATP = L-prolyl-tRNA(Pro) + AMP + diphosphate. In terms of biological role, catalyzes the attachment of proline to tRNA(Pro) in a two-step reaction: proline is first activated by ATP to form Pro-AMP and then transferred to the acceptor end of tRNA(Pro). As ProRS can inadvertently accommodate and process non-cognate amino acids such as alanine and cysteine, to avoid such errors it has two additional distinct editing activities against alanine. One activity is designated as 'pretransfer' editing and involves the tRNA(Pro)-independent hydrolysis of activated Ala-AMP. The other activity is designated 'posttransfer' editing and involves deacylation of mischarged Ala-tRNA(Pro). The misacylated Cys-tRNA(Pro) is not edited by ProRS. This Prochlorococcus marinus (strain MIT 9313) protein is Proline--tRNA ligase.